The following is a 365-amino-acid chain: Caffeic acid 3-O-methyltransferase 1 (365 aa).

Substrate is bound at residue 130–136 (MNQDKVL). Positions 162–180 (AFEYHGTDPRFNKVFNKGM) are substrate binding. Gly208, Asp231, Asp251, Met252, and Lys265 together coordinate S-adenosyl-L-methionine. The active-site Proton acceptor is the His269.

The protein belongs to the class I-like SAM-binding methyltransferase superfamily. Cation-independent O-methyltransferase family. COMT subfamily. Homodimer.

It catalyses the reaction (E)-caffeate + S-adenosyl-L-methionine = (E)-ferulate + S-adenosyl-L-homocysteine + H(+). Its pathway is aromatic compound metabolism; phenylpropanoid biosynthesis. In terms of biological role, catalyzes the conversion of caffeic acid to ferulic acid and of 5-hydroxyferulic acid to sinapic acid. The resulting products may subsequently be converted to the corresponding alcohols that are incorporated into lignins. The protein is Caffeic acid 3-O-methyltransferase 1 (HOMT1) of Populus kitakamiensis (Aspen).